Here is a 60-residue protein sequence, read N- to C-terminus: Conotoxin PnMRCL-022 (60 aa).

An N-terminal signal peptide occupies residues 1-22 (MRCLPVFVILLLLIASTPSVNA). Positions 23–45 (RPKTKDLASFHDNAKRTQHIFWS) are excised as a propeptide.

This sequence belongs to the conotoxin T superfamily. In terms of processing, contains 2 disulfide bonds that can be either 'C1-C3, C2-C4' or 'C1-C4, C2-C3', since these disulfide connectivities have been observed for conotoxins with cysteine framework V (for examples, see AC P0DQQ7 and AC P81755). Expressed by the venom duct.

The protein resides in the secreted. This is Conotoxin PnMRCL-022 from Conus pennaceus (Feathered cone).